Here is a 137-residue protein sequence, read N- to C-terminus: Large-conductance mechanosensitive channel (137 aa).

Transmembrane regions (helical) follow at residues 10–30 (FAMR…AAFG) and 76–96 (GAFI…FMAI).

This sequence belongs to the MscL family. In terms of assembly, homopentamer.

The protein localises to the cell inner membrane. Its function is as follows. Channel that opens in response to stretch forces in the membrane lipid bilayer. May participate in the regulation of osmotic pressure changes within the cell. The chain is Large-conductance mechanosensitive channel from Pectobacterium carotovorum subsp. carotovorum (strain PC1).